The sequence spans 204 residues: DNA polymerase epsilon subunit D (204 aa).

The span at 165-177 (KEVQRRRAEKTPA) shows a compositional bias: basic and acidic residues. The segment at 165-204 (KEVQRRRAEKTPAADEGQAEEGDAADEEEGSHKRAKLDEH) is disordered. Acidic residues predominate over residues 181–193 (GQAEEGDAADEEE). Basic and acidic residues predominate over residues 194 to 204 (GSHKRAKLDEH).

In terms of assembly, heterotetramer. Consists of four subunits: POL2, DPB2, DPB3 and DPB4.

It localises to the nucleus. Functionally, as accessory component of the DNA polymerase epsilon (DNA polymerase II) participates in chromosomal DNA replication. This is DNA polymerase epsilon subunit D (DPB4) from Eremothecium gossypii (strain ATCC 10895 / CBS 109.51 / FGSC 9923 / NRRL Y-1056) (Yeast).